Consider the following 420-residue polypeptide: Protein-lysine 6-oxidase (420 aa).

The first 27 residues, 1 to 27, serve as a signal peptide directing secretion; it reads MRCAPPGLLLAQLHACIFWSGLWPAGC. Residues 28–171 constitute a propeptide, removed by BMP1; the sequence is QSPPAAWRQR…RPGREDVMVG (144 aa). A disordered region spans residues 54–177; the sequence is AQYQPPRRRQ…VMVGDDPYSP (124 aa). Asn78 is a glycosylation site (N-linked (GlcNAc...) asparagine). Residues 82-92 show a composition bias toward low complexity; the sequence is PRAAAAAAARP. Positions 93–105 are enriched in pro residues; the sequence is QPEPQPQAQPQPR. 2 stretches are compositionally biased toward basic residues: residues 107–119 and 134–147; these read RSSR…RRHW and APRR…SRRR. Tyr190 bears the Sulfotyrosine mark. Residues 216 to 420 form a lysyl-oxidase like region; sequence PDLVPDPYYI…YASGCTISPY (205 aa). Disulfide bonds link Cys241–Cys247, Cys294–Cys343, Cys327–Cys333, Cys354–Cys364, and Cys401–Cys415. Cu cation is bound by residues His295, His297, and His299. The segment at residues 323–358 is a cross-link (lysine tyrosylquinone (Lys-Tyr)); the sequence is KASFCLEDTSCDYGYYRRYACTAHTQGLSPGCYDTY. The residue at position 358 (Tyr358) is a 2',4',5'-topaquinone.

Belongs to the lysyl oxidase family. It depends on Cu cation as a cofactor. The cofactor is lysine tyrosylquinone residue. Post-translationally, the lysine tyrosylquinone cross-link (LTQ) is generated by condensation of the epsilon-amino group of a lysine with a topaquinone produced by oxidation of tyrosine. In terms of processing, proteolytically cleaved by BMP1 which removes the propeptide. Also proteolytically cleaved by ADAMTS2 and ADAMTS14, but not by ADAMTS3, at an additional cleavage site downstream of the BMP1 cleavage site. The propeptide plays a role in directing the deposition of this enzyme to elastic fibers, via interaction with tropoelastin. Cleavage by BMP1 to remove the propeptide does not increase enzymatic activity but increases binding to collagen. Cleavage by ADAMTS2 produces a form with reduced collagen-binding activity. Sulfated at Tyr-190 and also at either Tyr-186 or Tyr-187 which enhances binding to collagen.

The protein localises to the secreted. It is found in the extracellular space. The enzyme catalyses L-lysyl-[protein] + O2 + H2O = (S)-2-amino-6-oxohexanoyl-[protein] + H2O2 + NH4(+). In terms of biological role, responsible for the post-translational oxidative deamination of peptidyl lysine residues in precursors to fibrous collagen and elastin. Functionally, in addition to cross linking of extracellular matrix proteins, it may have a direct role in tumor suppression. The protein is Protein-lysine 6-oxidase (LOX) of Gallus gallus (Chicken).